The primary structure comprises 473 residues: Photosystem II CP43 reaction center protein (473 aa).

The propeptide occupies 1–14; the sequence is MKILYSLRRFYHVE. At threonine 15 the chain carries N-acetylthreonine. Threonine 15 carries the post-translational modification Phosphothreonine. 5 helical membrane passes run 69–93, 134–155, 178–200, 255–275, and 291–312; these read LFEV…PHLA, LLGP…KDRN, KALY…RKIT, KPFA…LSYS, and WFNN…ASQA. Glutamate 367 is a binding site for [CaMn4O5] cluster. Residues 447 to 471 traverse the membrane as a helical segment; the sequence is RARAAAAGFEKGIDRDLEPVLYMNP.

Belongs to the PsbB/PsbC family. PsbC subfamily. PSII is composed of 1 copy each of membrane proteins PsbA, PsbB, PsbC, PsbD, PsbE, PsbF, PsbH, PsbI, PsbJ, PsbK, PsbL, PsbM, PsbT, PsbX, PsbY, PsbZ, Psb30/Ycf12, at least 3 peripheral proteins of the oxygen-evolving complex and a large number of cofactors. It forms dimeric complexes. The cofactor is Binds multiple chlorophylls and provides some of the ligands for the Ca-4Mn-5O cluster of the oxygen-evolving complex. It may also provide a ligand for a Cl- that is required for oxygen evolution. PSII binds additional chlorophylls, carotenoids and specific lipids..

The protein localises to the plastid. Its subcellular location is the chloroplast thylakoid membrane. In terms of biological role, one of the components of the core complex of photosystem II (PSII). It binds chlorophyll and helps catalyze the primary light-induced photochemical processes of PSII. PSII is a light-driven water:plastoquinone oxidoreductase, using light energy to abstract electrons from H(2)O, generating O(2) and a proton gradient subsequently used for ATP formation. This Hordeum vulgare (Barley) protein is Photosystem II CP43 reaction center protein.